Here is a 214-residue protein sequence, read N- to C-terminus: Protein GrpE (214 aa).

Residues 1-13 (MKHTSEPTSQPDT) are compositionally biased toward polar residues. Residues 1-61 (MKHTSEPTSQ…AAVAEATIEP (61 aa)) are disordered. Residues 14 to 57 (QAAESAQSSAAAAGQAASAYSSQAQRASADAQAIAGDEAAVAEA) show a composition bias toward low complexity.

This sequence belongs to the GrpE family. As to quaternary structure, homodimer.

It is found in the cytoplasm. Functionally, participates actively in the response to hyperosmotic and heat shock by preventing the aggregation of stress-denatured proteins, in association with DnaK and GrpE. It is the nucleotide exchange factor for DnaK and may function as a thermosensor. Unfolded proteins bind initially to DnaJ; upon interaction with the DnaJ-bound protein, DnaK hydrolyzes its bound ATP, resulting in the formation of a stable complex. GrpE releases ADP from DnaK; ATP binding to DnaK triggers the release of the substrate protein, thus completing the reaction cycle. Several rounds of ATP-dependent interactions between DnaJ, DnaK and GrpE are required for fully efficient folding. The chain is Protein GrpE from Ralstonia nicotianae (strain ATCC BAA-1114 / GMI1000) (Ralstonia solanacearum).